We begin with the raw amino-acid sequence, 95 residues long: Cell division topological specificity factor (95 aa).

This sequence belongs to the MinE family.

Its function is as follows. Prevents the cell division inhibition by proteins MinC and MinD at internal division sites while permitting inhibition at polar sites. This ensures cell division at the proper site by restricting the formation of a division septum at the midpoint of the long axis of the cell. In Methylorubrum extorquens (strain PA1) (Methylobacterium extorquens), this protein is Cell division topological specificity factor.